The chain runs to 329 residues: Ketol-acid reductoisomerase (NADP(+)) (329 aa).

The region spanning 1 to 181 is the KARI N-terminal Rossmann domain; that stretch reads MKIYYDQDAD…GGTRGGVLTT (181 aa). NADP(+)-binding positions include 24–27, arginine 47, and 82–85; these read YGSQ and DQHQ. Residue histidine 107 is part of the active site. Residue glycine 133 participates in NADP(+) binding. Residues 182–327 form the KARI C-terminal knotted domain; it reads TFKEETETDL…AKLRGMMSWL (146 aa). Mg(2+)-binding residues include aspartate 190, glutamate 194, glutamate 226, and glutamate 230. Residue serine 251 coordinates substrate.

It belongs to the ketol-acid reductoisomerase family. Requires Mg(2+) as cofactor.

The catalysed reaction is (2R)-2,3-dihydroxy-3-methylbutanoate + NADP(+) = (2S)-2-acetolactate + NADPH + H(+). It carries out the reaction (2R,3R)-2,3-dihydroxy-3-methylpentanoate + NADP(+) = (S)-2-ethyl-2-hydroxy-3-oxobutanoate + NADPH + H(+). The protein operates within amino-acid biosynthesis; L-isoleucine biosynthesis; L-isoleucine from 2-oxobutanoate: step 2/4. It functions in the pathway amino-acid biosynthesis; L-valine biosynthesis; L-valine from pyruvate: step 2/4. In terms of biological role, involved in the biosynthesis of branched-chain amino acids (BCAA). Catalyzes an alkyl-migration followed by a ketol-acid reduction of (S)-2-acetolactate (S2AL) to yield (R)-2,3-dihydroxy-isovalerate. In the isomerase reaction, S2AL is rearranged via a Mg-dependent methyl migration to produce 3-hydroxy-3-methyl-2-ketobutyrate (HMKB). In the reductase reaction, this 2-ketoacid undergoes a metal-dependent reduction by NADPH to yield (R)-2,3-dihydroxy-isovalerate. The polypeptide is Ketol-acid reductoisomerase (NADP(+)) (Solidesulfovibrio magneticus (strain ATCC 700980 / DSM 13731 / RS-1) (Desulfovibrio magneticus)).